The chain runs to 205 residues: MLQATGVILAGGRSRRMGQEKALLEVGREAMIRRVAGVLKEVFAEVIISGGVEENGLRLGLRVVPDLIAGGGPLSGIHAALCGAAFAKCLVVACDMPFICPELARYMMEQSEGYDVAVPRHGQHLQPLFAVYSKGCIRAIEESLRAHKCKVIDFYPLVRVNYVSEENLRALADIEVAFFNVNTPSDLVKARVMAENSRTGRVWLV.

Residues 9–11 (LAG), Lys-21, Asp-66, and Asp-95 each bind GTP. Asp-95 contacts Mg(2+).

The protein belongs to the MobA family. Mg(2+) serves as cofactor.

The protein resides in the cytoplasm. It carries out the reaction Mo-molybdopterin + GTP + H(+) = Mo-molybdopterin guanine dinucleotide + diphosphate. Transfers a GMP moiety from GTP to Mo-molybdopterin (Mo-MPT) cofactor (Moco or molybdenum cofactor) to form Mo-molybdopterin guanine dinucleotide (Mo-MGD) cofactor. The polypeptide is Probable molybdenum cofactor guanylyltransferase (Pelotomaculum thermopropionicum (strain DSM 13744 / JCM 10971 / SI)).